Consider the following 465-residue polypeptide: Probable Xaa-Pro aminopeptidase pepP (465 aa).

Positions 263, 274, 397, and 437 each coordinate Mn(2+).

Belongs to the peptidase M24B family. The cofactor is Mn(2+).

It carries out the reaction Release of any N-terminal amino acid, including proline, that is linked to proline, even from a dipeptide or tripeptide.. Functionally, catalyzes the removal of a penultimate prolyl residue from the N-termini of peptides. The sequence is that of Probable Xaa-Pro aminopeptidase pepP (pepP) from Emericella nidulans (strain FGSC A4 / ATCC 38163 / CBS 112.46 / NRRL 194 / M139) (Aspergillus nidulans).